A 104-amino-acid polypeptide reads, in one-letter code: Large ribosomal subunit protein bL21 (104 aa).

It belongs to the bacterial ribosomal protein bL21 family. As to quaternary structure, part of the 50S ribosomal subunit. Contacts protein L20.

Functionally, this protein binds to 23S rRNA in the presence of protein L20. The sequence is that of Large ribosomal subunit protein bL21 from Streptococcus agalactiae serotype Ia (strain ATCC 27591 / A909 / CDC SS700).